The following is a 1330-amino-acid chain: ABC multidrug transporter mdr4 (1330 aa).

N-linked (GlcNAc...) asparagine glycosylation is present at N3. The next 6 membrane-spanning stretches (helical) occupy residues 90–110, 144–164, 218–238, 243–263, 324–344, and 370–390; these read VLLI…FPLL, VLYV…HSTC, KVGL…VAFI, IAGM…GGGH, HAAQ…LAFW, and IFVL…IHVF. One can recognise an ABC transmembrane type-1 1 domain in the interval 94 to 392; that stretch reads IGGLLFAICA…VAPFIHVFAS (299 aa). The 239-residue stretch at 428–666 folds into the ABC transporter 1 domain; the sequence is IRFRDVHFKY…GGVYAEMVRL (239 aa). 463-470 is a binding site for ATP; the sequence is GPSGGGKS. N707 carries N-linked (GlcNAc...) asparagine glycosylation. A disordered region spans residues 717 to 736; the sequence is VADTPSDSRDGSEEEARKKR. A compositionally biased stretch (basic and acidic residues) spans 722–733; it reads SDSRDGSEEEAR. 6 helical membrane-spanning segments follow: residues 761 to 781, 806 to 826, 871 to 893, 903 to 923, 989 to 1009, and 1023 to 1043; these read LLGL…AIVF, LLFF…GCAF, ASAL…VNLI, AWKI…SGMM, AWLA…YWWG, and FFIV…MFAL. Residues 761-1049 enclose the ABC transmembrane type-1 2 domain; sequence LLGLAMSVII…MFALAPDISK (289 aa). The ABC transporter 2 domain occupies 1086 to 1325; that stretch reads AQLRDVHFTY…SETYRTSVIH (240 aa). 1121–1128 lines the ATP pocket; that stretch reads GPSGSGKS.

The protein belongs to the ABC transporter superfamily. ABCB family. Multidrug resistance exporter (TC 3.A.1.201) subfamily.

The protein resides in the cell membrane. It carries out the reaction itraconazole(in) + ATP + H2O = itraconazole(out) + ADP + phosphate + H(+). The catalysed reaction is voriconazole(in) + ATP + H2O = voriconazole(out) + ADP + phosphate + H(+). Functionally, pleiotropic ABC efflux transporter that confers resistance to azoles such as itraconazole and voriconazole. This chain is ABC multidrug transporter mdr4, found in Aspergillus fumigatus (strain ATCC MYA-4609 / CBS 101355 / FGSC A1100 / Af293) (Neosartorya fumigata).